A 1131-amino-acid polypeptide reads, in one-letter code: DNA polymerase II large subunit (1131 aa).

This sequence belongs to the archaeal DNA polymerase II family. As to quaternary structure, heterodimer of a large subunit and a small subunit.

The catalysed reaction is DNA(n) + a 2'-deoxyribonucleoside 5'-triphosphate = DNA(n+1) + diphosphate. It carries out the reaction Exonucleolytic cleavage in the 3'- to 5'-direction to yield nucleoside 5'-phosphates.. Functionally, possesses two activities: a DNA synthesis (polymerase) and an exonucleolytic activity that degrades single-stranded DNA in the 3'- to 5'-direction. Has a template-primer preference which is characteristic of a replicative DNA polymerase. This chain is DNA polymerase II large subunit, found in Methanococcus maripaludis (strain C5 / ATCC BAA-1333).